Consider the following 536-residue polypeptide: Phosphoenolpyruvate carboxykinase (ATP) (536 aa).

Substrate contacts are provided by R61, Y195, and K201. ATP-binding positions include K201, H220, and 236–244 (GLSGTGKTT). Residues K201 and H220 each contribute to the Mn(2+) site. D257 provides a ligand contact to Mn(2+). Positions 285, 322, and 447 each coordinate ATP. R322 contributes to the substrate binding site.

The protein belongs to the phosphoenolpyruvate carboxykinase (ATP) family. Mn(2+) serves as cofactor.

It is found in the cytoplasm. It carries out the reaction oxaloacetate + ATP = phosphoenolpyruvate + ADP + CO2. It participates in carbohydrate biosynthesis; gluconeogenesis. Involved in the gluconeogenesis. Catalyzes the conversion of oxaloacetate (OAA) to phosphoenolpyruvate (PEP) through direct phosphoryl transfer between the nucleoside triphosphate and OAA. This Rhizobium etli (strain ATCC 51251 / DSM 11541 / JCM 21823 / NBRC 15573 / CFN 42) protein is Phosphoenolpyruvate carboxykinase (ATP).